Reading from the N-terminus, the 593-residue chain is MIQALLVIICLAVFPHQGSSIILESGNVNDYEVVYPQKVPALLKGGVQNPQPETKYEDTMRYEFQVNGEPVVLHLERNKGLFSEDYTETHYAPDGREITTSPPVQDHCYYHGYIQNEADSSAVISACDGLKGHFEHQGETYFIEPLKISNSEAHAIYKDENVENEDETPEICGVTETTWESDESIEKTSQLTNTPEQDRYLQDKKYIEFYVIVDNRMYRYYNNDKPAIKIRVYEMINAVNTKFRPLKIHIALIGLEIWSNKDKFEVKPAASVTLKSFGEWRETVLLPRKRNDNAQLLTGIDFNGNTVGRAYIGSLCKTNESVAIVQDYNRRISLVASTMTHELGHNLGIHHDKASCICIPGPCIMLKKRTAPAFQFSSCSIREYREYLLRDRPQCILNKPLSTDIVSPPICGNYFVEVGEECDCGSPQACQSACCNAATCQFKGAETECRVAKDDCDLPELCTGQSAECPTDSLQRNGHPCQNNQGYCYNRTCPTLTNQCITLLGPHFTVSPKGCFDLNMRGDDGSFCGMEDGTKIPCAAKDVKCGRLYCTEKNTMSCLIPPNPDGIMAEPGTKCGDGMVCSKGQCVDVQTAY.

The signal sequence occupies residues 1 to 20 (MIQALLVIICLAVFPHQGSS). The propeptide occupies 21–191 (IILESGNVND…DESIEKTSQL (171 aa)). Residues 205–400 (KYIEFYVIVD…DRPQCILNKP (196 aa)) enclose the Peptidase M12B domain. Ca(2+) contacts are provided by E208 and D292. 3 cysteine pairs are disulfide-bonded: C316/C395, C356/C379, and C358/C363. N319 carries N-linked (GlcNAc...) asparagine glycosylation. H341 lines the Zn(2+) pocket. The active site involves E342. Zn(2+) contacts are provided by H345 and H351. Ca(2+) contacts are provided by C395, N398, I410, N413, F415, E417, E420, and D423. The 70-residue stretch at 408 to 477 (PPICGNYFVE…ECPTDSLQRN (70 aa)) folds into the Disintegrin domain. Cystine bridges form between C422-C435, C424-C430, C434-C440, C449-C469, C456-C488, C481-C493, C500-C550, C515-C558, C528-C538, C545-C581, and C575-C586. Residues 455–457 (DCD) carry the D/ECD-tripeptide motif. Positions 457, 458, 460, and 472 each coordinate Ca(2+). N490 carries an N-linked (GlcNAc...) asparagine glycan.

This sequence belongs to the venom metalloproteinase (M12B) family. P-III subfamily. P-IIIa sub-subfamily. Monomer. Requires Zn(2+) as cofactor. Expressed by the venom gland.

Its subcellular location is the secreted. Inhibited by EDTA, EGTA, 1,10-phenanthroline and DTT. Not inhibited by PMSF and SBTI. Its function is as follows. Snake venom zinc protease that inhibits the classical and alternative pathways of complement by cleaving factor B, C6, C7, and C8. Also slowly and selectively degrades alpha-chain of fibrinogen (FGA), and shows edema-inducing activity. This is Zinc metalloproteinase-disintegrin-like atrase-B from Naja atra (Chinese cobra).